Consider the following 98-residue polypeptide: Integration host factor subunit beta (98 aa).

The protein belongs to the bacterial histone-like protein family. Heterodimer of an alpha and a beta chain.

In terms of biological role, this protein is one of the two subunits of integration host factor, a specific DNA-binding protein that functions in genetic recombination as well as in transcriptional and translational control. In Marinobacter nauticus (strain ATCC 700491 / DSM 11845 / VT8) (Marinobacter aquaeolei), this protein is Integration host factor subunit beta.